The chain runs to 504 residues: 2,3-bisphosphoglycerate-independent phosphoglycerate mutase (504 aa).

2 residues coordinate Mn(2+): Asp9 and Ser59. The Phosphoserine intermediate role is filled by Ser59. Substrate contacts are provided by residues His120, 149-150, Arg181, Arg187, 253-256, and Lys326; these read RD and RPDR. Residues Asp393, His397, Asp434, His435, and His451 each coordinate Mn(2+).

This sequence belongs to the BPG-independent phosphoglycerate mutase family. The cofactor is Mn(2+).

It carries out the reaction (2R)-2-phosphoglycerate = (2R)-3-phosphoglycerate. Its pathway is carbohydrate degradation; glycolysis; pyruvate from D-glyceraldehyde 3-phosphate: step 3/5. In terms of biological role, catalyzes the interconversion of 2-phosphoglycerate and 3-phosphoglycerate. The sequence is that of 2,3-bisphosphoglycerate-independent phosphoglycerate mutase from Haloquadratum walsbyi (strain DSM 16790 / HBSQ001).